Consider the following 94-residue polypeptide: Surfactant-associated protein 3 (94 aa).

Found in lung alveolar cells type I and II, as well as alveolar macrophages (at protein level). Detected also in testis and kidney. Expressed by different tissues of the ocular system like cornea, conjuctiva, lacrimal gland, eyelid and efferent tear ducts (at protein level). From these tissues is secreted into the tear film (at protein level).

It localises to the cytoplasm. The protein resides in the secreted. Putative surfactant protein. May be involved in wound healing and in the reduction of the surface tension at the ocular surface. In Homo sapiens (Human), this protein is Surfactant-associated protein 3 (SFTA3).